A 215-amino-acid polypeptide reads, in one-letter code: MPTANQLIRHGREEKRRTDRTEVLVFGLLVTRIIRFVHSVLFPIPVFCSIKVLLDYFCSLPIIDKLSKKWQLIWFYVLSVILCKSLFAVGYLWMDDLSRAISQFYPVVSGGLGGGNTPMPPTNPSEGGLLEGYYAHENEHSHDQQRGSPFWSKEYKESGSKRLFLNLEVEDQNTDTIGEQVKAESGKCEKIKAKIIAKTHELLVSEDTKFQIKTI.

2 helical membrane-spanning segments follow: residues 40–60 (VLFPIPVFCSIKVLLDYFCSL) and 72–92 (LIWFYVLSVILCKSLFAVGYL).

It is found in the mitochondrion membrane. This is an uncharacterized protein from Arabidopsis thaliana (Mouse-ear cress).